The primary structure comprises 496 residues: Lysosomal Pro-X carboxypeptidase (496 aa).

Positions 1 to 21 are cleaved as a signal peptide; it reads MGRRALLLLLLSFLAPWATIA. Residues 22-45 constitute a propeptide that is removed on maturation; that stretch reads LRPALRALGSLHLPTNPTSLPAVA. Residues N47 and N101 are each glycosylated (N-linked (GlcNAc...) asparagine). Catalysis depends on S179, which acts as the Charge relay system. The interval 194-334 is SKS domain; that stretch reads HMVVGALAAS…QNIFQALNVY (141 aa). 4 cysteine pairs are disulfide-bonded: C215–C372, C233–C310, C264–C343, and C364–C394. 3 N-linked (GlcNAc...) asparagine glycosylation sites follow: N317, N336, and N345. N-linked (GlcNAc...) asparagine glycosylation occurs at N415. Catalysis depends on charge relay system residues D430 and H455.

This sequence belongs to the peptidase S28 family. In terms of assembly, homodimer. As to expression, highest levels in placenta, lung and liver. Also present in heart, brain, pancreas and kidney.

The protein resides in the lysosome. The enzyme catalyses Cleavage of a -Pro-|-Xaa bond to release a C-terminal amino acid.. In terms of biological role, cleaves C-terminal amino acids linked to proline in peptides such as angiotensin II, III and des-Arg9-bradykinin. This cleavage occurs at acidic pH, but enzymatic activity is retained with some substrates at neutral pH. This is Lysosomal Pro-X carboxypeptidase (PRCP) from Homo sapiens (Human).